Reading from the N-terminus, the 331-residue chain is Adenosine deaminase (331 aa).

Zn(2+) contacts are provided by His12 and His14. 3 residues coordinate substrate: His14, Asp16, and Gly170. Zn(2+) is bound at residue His197. Glu200 functions as the Proton donor in the catalytic mechanism. Asp278 provides a ligand contact to Zn(2+). Asp279 provides a ligand contact to substrate.

It belongs to the metallo-dependent hydrolases superfamily. Adenosine and AMP deaminases family. Adenosine deaminase subfamily. The cofactor is Zn(2+).

It catalyses the reaction adenosine + H2O + H(+) = inosine + NH4(+). The catalysed reaction is 2'-deoxyadenosine + H2O + H(+) = 2'-deoxyinosine + NH4(+). Functionally, catalyzes the hydrolytic deamination of adenosine and 2-deoxyadenosine. This Shewanella sp. (strain ANA-3) protein is Adenosine deaminase.